The sequence spans 350 residues: tRNA uridine(34) hydroxylase (350 aa).

The Rhodanese domain maps to 146–240 (DDPDALFIDM…YARKAREQGL (95 aa)). Cys200 serves as the catalytic Cysteine persulfide intermediate.

This sequence belongs to the TrhO family.

It carries out the reaction uridine(34) in tRNA + AH2 + O2 = 5-hydroxyuridine(34) in tRNA + A + H2O. In terms of biological role, catalyzes oxygen-dependent 5-hydroxyuridine (ho5U) modification at position 34 in tRNAs. This is tRNA uridine(34) hydroxylase from Shigella flexneri serotype 5b (strain 8401).